We begin with the raw amino-acid sequence, 72 residues long: Translation initiation factor IF-1 (72 aa).

The region spanning 1 to 72 (MSKDDCIEFE…TKGRIIYRMK (72 aa)) is the S1-like domain.

This sequence belongs to the IF-1 family. As to quaternary structure, component of the 30S ribosomal translation pre-initiation complex which assembles on the 30S ribosome in the order IF-2 and IF-3, IF-1 and N-formylmethionyl-tRNA(fMet); mRNA recruitment can occur at any time during PIC assembly.

It localises to the cytoplasm. In terms of biological role, one of the essential components for the initiation of protein synthesis. Stabilizes the binding of IF-2 and IF-3 on the 30S subunit to which N-formylmethionyl-tRNA(fMet) subsequently binds. Helps modulate mRNA selection, yielding the 30S pre-initiation complex (PIC). Upon addition of the 50S ribosomal subunit IF-1, IF-2 and IF-3 are released leaving the mature 70S translation initiation complex. In Xylella fastidiosa (strain Temecula1 / ATCC 700964), this protein is Translation initiation factor IF-1.